We begin with the raw amino-acid sequence, 128 residues long: Histone H2A type 1-H (128 aa).

Residues 1-22 (MSGRGKQGGKARAKAKTRSSRA) form a disordered region. Residue S2 is modified to N-acetylserine. Residue S2 is modified to Phosphoserine; by RPS6KA5. At R4 the chain carries Citrulline; alternate. R4 carries the symmetric dimethylarginine; by PRMT5; alternate modification. N6-(2-hydroxyisobutyryl)lysine; alternate is present on residues K6 and K10. At K6 the chain carries N6-(beta-hydroxybutyryl)lysine; alternate. The segment covering 7-19 (QGGKARAKAKTRS) has biased composition (basic residues). Position 10 is an N6-lactoyllysine; alternate (K10). K10 carries the post-translational modification N6-succinyllysine; alternate. Glycyl lysine isopeptide (Lys-Gly) (interchain with G-Cter in ubiquitin) cross-links involve residues K14 and K16. Position 37 is an N6-(2-hydroxyisobutyryl)lysine; alternate (K37). K37 carries the N6-(beta-hydroxybutyryl)lysine; alternate modification. N6-crotonyllysine; alternate is present on K37. N6-(2-hydroxyisobutyryl)lysine is present on residues K75 and K76. K96 bears the N6-(2-hydroxyisobutyryl)lysine; alternate mark. An N6-succinyllysine; alternate modification is found at K96. K96 carries the post-translational modification N6-glutaryllysine; alternate. An N5-methylglutamine modification is found at Q105. K119 is subject to N6-(2-hydroxyisobutyryl)lysine; alternate. K119 and K120 each carry N6-crotonyllysine; alternate. 2 positions are modified to N6-glutaryllysine; alternate: K119 and K120. N6-(beta-hydroxybutyryl)lysine; alternate is present on K120. Residue K120 forms a Glycyl lysine isopeptide (Lys-Gly) (interchain with G-Cter in ubiquitin); alternate linkage. T121 is subject to Phosphothreonine; by DCAF1. K126 is subject to N6-(beta-hydroxybutyryl)lysine; alternate. Position 126 is an N6-crotonyllysine; alternate (K126). An N6-glutaryllysine; alternate modification is found at K126.

Belongs to the histone H2A family. As to quaternary structure, the nucleosome is a histone octamer containing two molecules each of H2A, H2B, H3 and H4 assembled in one H3-H4 heterotetramer and two H2A-H2B heterodimers. The octamer wraps approximately 147 bp of DNA. Post-translationally, deiminated on Arg-4 in granulocytes upon calcium entry. In terms of processing, monoubiquitination of Lys-120 (H2AK119Ub) by RING1, TRIM37 and RNF2/RING2 complex gives a specific tag for epigenetic transcriptional repression and participates in X chromosome inactivation of female mammals. It is involved in the initiation of both imprinted and random X inactivation. Ubiquitinated H2A is enriched in inactive X chromosome chromatin. Ubiquitination of H2A functions downstream of methylation of 'Lys-27' of histone H3 (H3K27me). H2AK119Ub by RNF2/RING2 can also be induced by ultraviolet and may be involved in DNA repair. Following DNA double-strand breaks (DSBs), it is ubiquitinated through 'Lys-63' linkage of ubiquitin moieties by the E2 ligase UBE2N and the E3 ligases RNF8 and RNF168, leading to the recruitment of repair proteins to sites of DNA damage. Ubiquitination at Lys-14 and Lys-16 (H2AK13Ub and H2AK15Ub, respectively) in response to DNA damage is initiated by RNF168 that mediates monoubiquitination at these 2 sites, and 'Lys-63'-linked ubiquitin are then conjugated to monoubiquitin; RNF8 is able to extend 'Lys-63'-linked ubiquitin chains in vitro. H2AK119Ub and ionizing radiation-induced 'Lys-63'-linked ubiquitination (H2AK13Ub and H2AK15Ub) are distinct events. Phosphorylation on Ser-2 (H2AS1ph) is enhanced during mitosis. Phosphorylation on Ser-2 by RPS6KA5/MSK1 directly represses transcription. Acetylation of H3 inhibits Ser-2 phosphorylation by RPS6KA5/MSK1. Phosphorylation at Thr-121 (H2AT120ph) by DCAF1 is present in the regulatory region of many tumor suppresor genes and down-regulates their transcription. Post-translationally, symmetric dimethylation on Arg-4 by the PRDM1/PRMT5 complex may play a crucial role in the germ-cell lineage. In terms of processing, glutamine methylation at Gln-105 (H2AQ104me) by FBL is specifically dedicated to polymerase I. It is present at 35S ribosomal DNA locus and impairs binding of the FACT complex. Crotonylation (Kcr) is specifically present in male germ cells and marks testis-specific genes in post-meiotic cells, including X-linked genes that escape sex chromosome inactivation in haploid cells. Crotonylation marks active promoters and enhancers and confers resistance to transcriptional repressors. It is also associated with post-meiotically activated genes on autosomes. Post-translationally, hydroxybutyrylation of histones is induced by starvation. In terms of processing, lactylated in macrophages by EP300/P300 by using lactoyl-CoA directly derived from endogenous or exogenous lactate, leading to stimulates gene transcription.

Its subcellular location is the nucleus. It is found in the chromosome. Its function is as follows. Core component of nucleosome. Nucleosomes wrap and compact DNA into chromatin, limiting DNA accessibility to the cellular machineries which require DNA as a template. Histones thereby play a central role in transcription regulation, DNA repair, DNA replication and chromosomal stability. DNA accessibility is regulated via a complex set of post-translational modifications of histones, also called histone code, and nucleosome remodeling. In Mus musculus (Mouse), this protein is Histone H2A type 1-H.